A 952-amino-acid chain; its full sequence is Protein translocase subunit SecA (952 aa).

Residues Q135, 153–157 (GEGKT), and D575 each bind ATP. Positions 614-624 (RHESRRIDNQL) are enriched in basic and acidic residues. Disordered stretches follow at residues 614–636 (RHES…DPGS) and 916–946 (VSAK…GKKY). C938, C940, C949, and C950 together coordinate Zn(2+).

The protein belongs to the SecA family. Monomer and homodimer. Part of the essential Sec protein translocation apparatus which comprises SecA, SecYEG and auxiliary proteins SecDF. Other proteins may also be involved. Zn(2+) serves as cofactor.

The protein resides in the cell membrane. The protein localises to the cytoplasm. It carries out the reaction ATP + H2O + cellular proteinSide 1 = ADP + phosphate + cellular proteinSide 2.. Functionally, part of the Sec protein translocase complex. Interacts with the SecYEG preprotein conducting channel. Has a central role in coupling the hydrolysis of ATP to the transfer of proteins into and across the cell membrane, serving as an ATP-driven molecular motor driving the stepwise translocation of polypeptide chains across the membrane. The sequence is that of Protein translocase subunit SecA from Dehalococcoides mccartyi (strain ATCC BAA-2100 / JCM 16839 / KCTC 5957 / BAV1).